The chain runs to 416 residues: Kynureninase (416 aa).

Residues T97, S98, 129-132 (FPTD), T172, D201, H204, and Y226 contribute to the pyridoxal 5'-phosphate site. K227 is subject to N6-(pyridoxal phosphate)lysine. The pyridoxal 5'-phosphate site is built by W256 and T282.

Belongs to the kynureninase family. In terms of assembly, homodimer. Pyridoxal 5'-phosphate is required as a cofactor.

It carries out the reaction L-kynurenine + H2O = anthranilate + L-alanine + H(+). It catalyses the reaction 3-hydroxy-L-kynurenine + H2O = 3-hydroxyanthranilate + L-alanine + H(+). It functions in the pathway amino-acid degradation; L-kynurenine degradation; L-alanine and anthranilate from L-kynurenine: step 1/1. It participates in cofactor biosynthesis; NAD(+) biosynthesis; quinolinate from L-kynurenine: step 2/3. Functionally, catalyzes the cleavage of L-kynurenine (L-Kyn) and L-3-hydroxykynurenine (L-3OHKyn) into anthranilic acid (AA) and 3-hydroxyanthranilic acid (3-OHAA), respectively. In Pseudomonas fluorescens, this protein is Kynureninase.